Here is a 388-residue protein sequence, read N- to C-terminus: Phosphopentomutase (388 aa).

The Mn(2+) site is built by Asp11, Asp283, His288, Asp324, His325, and His336.

The protein belongs to the phosphopentomutase family. Mn(2+) serves as cofactor.

The protein resides in the cytoplasm. It catalyses the reaction 2-deoxy-alpha-D-ribose 1-phosphate = 2-deoxy-D-ribose 5-phosphate. The catalysed reaction is alpha-D-ribose 1-phosphate = D-ribose 5-phosphate. The protein operates within carbohydrate degradation; 2-deoxy-D-ribose 1-phosphate degradation; D-glyceraldehyde 3-phosphate and acetaldehyde from 2-deoxy-alpha-D-ribose 1-phosphate: step 1/2. In terms of biological role, isomerase that catalyzes the conversion of deoxy-ribose 1-phosphate (dRib-1-P) and ribose 1-phosphate (Rib-1-P) to deoxy-ribose 5-phosphate (dRib-5-P) and ribose 5-phosphate (Rib-5-P), respectively. The protein is Phosphopentomutase of Anaeromyxobacter dehalogenans (strain 2CP-1 / ATCC BAA-258).